Consider the following 141-residue polypeptide: Suppressor of RNA silencing (141 aa).

Short sequence motifs (bipartite nuclear localization signal) lie at residues 75-91 and 111-128; these read RKRVETRNREIWKQIRR and KKKFKEDREFGTPKRFLR. The disordered stretch occupies residues 94–117; the sequence is AENMSATAKKSHNSKTSKKKFKED. The segment covering 102–113 has biased composition (basic residues); it reads KKSHNSKTSKKK.

It is found in the host cytoplasm. The protein resides in the host nucleus. Weak suppressor of RNA-mediated gene silencing, also known as post-transcriptional gene silencing (PTGS), a mechanism of plant viral defense that performs sequence-specific inhibition of viral mRNAs expression. This could be used by the virus to infect efficiently the host the meristem cells. This chain is Suppressor of RNA silencing, found in Tobacco rattle virus (isolate PpK20) (TRV).